We begin with the raw amino-acid sequence, 155 residues long: Endoribonuclease YbeY (155 aa).

The Zn(2+) site is built by H120, H124, and H130.

It belongs to the endoribonuclease YbeY family. The cofactor is Zn(2+).

It is found in the cytoplasm. Functionally, single strand-specific metallo-endoribonuclease involved in late-stage 70S ribosome quality control and in maturation of the 3' terminus of the 16S rRNA. This Staphylococcus aureus (strain Mu3 / ATCC 700698) protein is Endoribonuclease YbeY.